Here is a 624-residue protein sequence, read N- to C-terminus: MRLLFIHADEMSFEARQKTKIAEEEPPIKEAEVEDCLVVFAAVQEADEENPKAIAEAAVEEIEDVAGELKADRIVLYPYAHLADDLASPDVAVEVLKRMEGLLKERGYEVVRAPFGWYKAFRLACKGHPLSELSRTVTPEAAEEAEEEKIESEFLVYMDGELIPVEEVDLSELPEDFRHLVMHELGEERETGDEEPAHVKLMREKEICDHEPAADVGHVRWYPKGHVVRRCLAEYVENLMADLGAAVVETPVMYDLSEDAIREHADKFGERQYRIRAGNRALMLRYAACFGAFRLLADTTLSRRHLPLKIYELSQSFRLEQSGEVVGLKRLRAFTMPDLHTVCADMDEAVEEFLEQAKLCLEVGLDLGLEYEVVFRTTEKFLKERKEVLEELAEAMEKAYGDAKPVLVEVLPERKHYWECKVDFAFIDSLGRPIENPTVQIDVESGRRFGITYADESGDERHPVILHCSPTGSLERVICAILEGQYKRFEQEGKLPTLPTWLSPVQARVIPVSEKVLEEAEKVFEELKSEGFRVDLDDRDEPVGRKIRDAGEEWVPYVIVIGEEEVKKGTLSVTIREESTLKEQRREEMTLEELVERLERETEGKPRVPLTIPDRLSRRPRFGR.

Residues 1–143 are editing domain; sequence MRLLFIHADE…SRTVTPEAAE (143 aa). A catalytic region spans residues 197–499; the sequence is AHVKLMREKE…EQEGKLPTLP (303 aa). Residues cysteine 289, histidine 340, and histidine 467 each coordinate Zn(2+). Positions 598 to 624 are disordered; the sequence is LERETEGKPRVPLTIPDRLSRRPRFGR.

The protein belongs to the class-II aminoacyl-tRNA synthetase family. As to quaternary structure, homodimer. Zn(2+) serves as cofactor.

Its subcellular location is the cytoplasm. It carries out the reaction tRNA(Thr) + L-threonine + ATP = L-threonyl-tRNA(Thr) + AMP + diphosphate + H(+). Its function is as follows. Catalyzes the attachment of threonine to tRNA(Thr) in a two-step reaction: L-threonine is first activated by ATP to form Thr-AMP and then transferred to the acceptor end of tRNA(Thr). Also edits incorrectly charged L-seryl-tRNA(Thr). The protein is Threonine--tRNA ligase of Methanopyrus kandleri (strain AV19 / DSM 6324 / JCM 9639 / NBRC 100938).